A 179-amino-acid polypeptide reads, in one-letter code: Probable protein archease (179 aa).

Residues aspartate 55, aspartate 178, and valine 179 each coordinate Ca(2+).

The protein belongs to the archease family.

In terms of biological role, activates the tRNA-splicing ligase complex by facilitating the enzymatic turnover of catalytic subunit RtcB. Acts by promoting the guanylylation of RtcB, a key intermediate step in tRNA ligation. Can also alter the NTP specificity of RtcB such that ATP, dGTP or ITP is used efficiently. This is Probable protein archease from Mycobacterium tuberculosis (strain CDC 1551 / Oshkosh).